Here is a 326-residue protein sequence, read N- to C-terminus: GTP 3',8-cyclase (326 aa).

The 226-residue stretch at 7–232 (GFGRSFPYLR…PRAADAGPAR (226 aa)) folds into the Radical SAM core domain. Arg16 is a GTP binding site. [4Fe-4S] cluster is bound by residues Cys23 and Cys27. Residue Tyr29 coordinates S-adenosyl-L-methionine. Cys30 lines the [4Fe-4S] cluster pocket. Arg65 contributes to the GTP binding site. S-adenosyl-L-methionine is bound at residue Gly69. Thr96 lines the GTP pocket. An S-adenosyl-L-methionine-binding site is contributed by Ser120. Residue Lys157 coordinates GTP. Met191 contacts S-adenosyl-L-methionine. Residues Cys254 and Cys257 each contribute to the [4Fe-4S] cluster site. 259–261 (RLR) is a GTP binding site. Residue Cys271 coordinates [4Fe-4S] cluster.

The protein belongs to the radical SAM superfamily. MoaA family. As to quaternary structure, monomer and homodimer. The cofactor is [4Fe-4S] cluster.

It catalyses the reaction GTP + AH2 + S-adenosyl-L-methionine = (8S)-3',8-cyclo-7,8-dihydroguanosine 5'-triphosphate + 5'-deoxyadenosine + L-methionine + A + H(+). Its pathway is cofactor biosynthesis; molybdopterin biosynthesis. Its function is as follows. Catalyzes the cyclization of GTP to (8S)-3',8-cyclo-7,8-dihydroguanosine 5'-triphosphate. The chain is GTP 3',8-cyclase from Stenotrophomonas maltophilia (strain R551-3).